Reading from the N-terminus, the 416-residue chain is Lactose permease (416 aa).

Over 1-13 (MYYLKNTNFWMFG) the chain is Cytoplasmic. A helical transmembrane segment spans residues 14–34 (FFFFFYFFIMGAYFPFFPIWL). Topologically, residues 35–45 (HEVNHISKGDT) are periplasmic. The helical transmembrane segment at 46–66 (GIIFACISLFSLLFQPIFGLL) threads the bilayer. The Cytoplasmic portion of the chain corresponds to 67–75 (SDKLGLRKH). The chain crosses the membrane as a helical span at residues 76-96 (LLWVITGMLVMFAPFFIYVFG). A topological domain (periplasmic) is located at residue P97. Residues 98-118 (LLQVNILLGSIVGGIYLGFIY) traverse the membrane as a helical segment. Topologically, residues 119-144 (NAGAPAIEAYIEKASRRSNFEFGRAR) are cytoplasmic. Residues 145–165 (MFGCVGWALCASIAGIMFTIN) traverse the membrane as a helical segment. Position 166 (N166) is a topological domain, periplasmic. The chain crosses the membrane as a helical span at residues 167–187 (QFVFWLGSGCAVILALLLLFS). Residues 188 to 211 (KTDVPSSAKVADAVGANNSAFSLK) are Cytoplasmic-facing. The helical transmembrane segment at 212–232 (LALELFKQPKLWLISLYVVGV) threads the bilayer. Residues 233–262 (SCTYDVFDQQFANFFTSFFATGEQGTRVFG) lie on the Periplasmic side of the membrane. A helical membrane pass occupies residues 263 to 283 (YVTTMGELLNASIMFFAPLIV). Over 284 to 290 (NRIGGKN) the chain is Cytoplasmic. A helical transmembrane segment spans residues 291 to 309 (ALLLAGTIMSVRIIGSHSH). The Periplasmic segment spans residues 310-314 (TALEV). The chain crosses the membrane as a helical span at residues 315–336 (VILKTLHMFEIPFLIVGCFKYI). Residues 337–347 (TSQFEVRFSAT) are Cytoplasmic-facing. A helical membrane pass occupies residues 348 to 368 (IYLVCFCFFKQLAMIFMSVLA). Residues 369 to 378 (GKMYESIGFQ) lie on the Periplasmic side of the membrane. Residues 379–399 (GAYLVLGIIRVSFTLISVFTL) form a helical membrane-spanning segment. Residues 400–416 (SGPGPFSLLRRRESVAL) lie on the Cytoplasmic side of the membrane.

Belongs to the major facilitator superfamily. Oligosaccharide:H(+) symporter (OHS) (TC 2.A.1.5) family.

Its subcellular location is the cell inner membrane. It carries out the reaction lactose(in) + H(+)(in) = lactose(out) + H(+)(out). Its function is as follows. Responsible for transport of beta-galactosides into the cell, with the concomitant import of a proton (symport system). The protein is Lactose permease (lacY) of Citrobacter freundii.